Reading from the N-terminus, the 360-residue chain is Phospho-N-acetylmuramoyl-pentapeptide-transferase (360 aa).

Transmembrane regions (helical) follow at residues 27–47, 73–93, 94–114, 132–152, 168–188, 199–219, 236–256, 263–283, 288–308, and 338–358; these read IVSL…MIAW, TMGG…WANL, SNPY…VGFV, WKYF…YSIG, VMPQ…VGTS, GLAI…AWAT, ASEL…FLWF, VFMG…IAVL, FLLV…ILQV, and VIVR…ATLK.

Belongs to the glycosyltransferase 4 family. MraY subfamily. Mg(2+) is required as a cofactor.

Its subcellular location is the cell inner membrane. The catalysed reaction is UDP-N-acetyl-alpha-D-muramoyl-L-alanyl-gamma-D-glutamyl-meso-2,6-diaminopimeloyl-D-alanyl-D-alanine + di-trans,octa-cis-undecaprenyl phosphate = di-trans,octa-cis-undecaprenyl diphospho-N-acetyl-alpha-D-muramoyl-L-alanyl-D-glutamyl-meso-2,6-diaminopimeloyl-D-alanyl-D-alanine + UMP. It participates in cell wall biogenesis; peptidoglycan biosynthesis. In terms of biological role, catalyzes the initial step of the lipid cycle reactions in the biosynthesis of the cell wall peptidoglycan: transfers peptidoglycan precursor phospho-MurNAc-pentapeptide from UDP-MurNAc-pentapeptide onto the lipid carrier undecaprenyl phosphate, yielding undecaprenyl-pyrophosphoryl-MurNAc-pentapeptide, known as lipid I. This chain is Phospho-N-acetylmuramoyl-pentapeptide-transferase, found in Pectobacterium atrosepticum (strain SCRI 1043 / ATCC BAA-672) (Erwinia carotovora subsp. atroseptica).